Reading from the N-terminus, the 238-residue chain is tRNA1(Val) (adenine(37)-N6)-methyltransferase (238 aa).

This sequence belongs to the methyltransferase superfamily. tRNA (adenine-N(6)-)-methyltransferase family.

The protein resides in the cytoplasm. The catalysed reaction is adenosine(37) in tRNA1(Val) + S-adenosyl-L-methionine = N(6)-methyladenosine(37) in tRNA1(Val) + S-adenosyl-L-homocysteine + H(+). In terms of biological role, specifically methylates the adenine in position 37 of tRNA(1)(Val) (anticodon cmo5UAC). This Shewanella baltica (strain OS195) protein is tRNA1(Val) (adenine(37)-N6)-methyltransferase.